The sequence spans 612 residues: BTB/POZ domain-containing protein 9 (612 aa).

The BTB domain occupies 36–104 (GDVTFVVEKK…IYTGRATLTD (69 aa)). Positions 142–240 (VCMTFDVASL…SLTELLNVVR (99 aa)) constitute a BACK domain. Positions 560–612 (QSSQKEENSEESGTGDTSLAGQQLDSHALRAPSGSSLPSSPGSNSRSPNRQHQ) are disordered. Residues 573 to 584 (TGDTSLAGQQLD) show a composition bias toward polar residues. The segment covering 588 to 612 (LRAPSGSSLPSSPGSNSRSPNRQHQ) has biased composition (low complexity).

In terms of tissue distribution, detected in the brain (at protein level). Moderately expressed in all specific brain regions examined. Expressed in the dopaminergic neurons of the substantia nigra and A11 neurons. Highly expressed in kidney and moderately expressed in all other adult and fetal tissues.

The protein is BTB/POZ domain-containing protein 9 (BTBD9) of Homo sapiens (Human).